Consider the following 151-residue polypeptide: Phosphoribosyl-AMP cyclohydrolase (151 aa).

D94 is a Mg(2+) binding site. Residue C95 participates in Zn(2+) binding. Mg(2+) contacts are provided by D96 and D98. Zn(2+) is bound by residues C112 and C119.

It belongs to the PRA-CH family. Homodimer. Requires Mg(2+) as cofactor. Zn(2+) is required as a cofactor.

It is found in the cytoplasm. It carries out the reaction 1-(5-phospho-beta-D-ribosyl)-5'-AMP + H2O = 1-(5-phospho-beta-D-ribosyl)-5-[(5-phospho-beta-D-ribosylamino)methylideneamino]imidazole-4-carboxamide. Its pathway is amino-acid biosynthesis; L-histidine biosynthesis; L-histidine from 5-phospho-alpha-D-ribose 1-diphosphate: step 3/9. Catalyzes the hydrolysis of the adenine ring of phosphoribosyl-AMP. In Rhodopseudomonas palustris (strain ATCC BAA-98 / CGA009), this protein is Phosphoribosyl-AMP cyclohydrolase.